The chain runs to 194 residues: dTTP/UTP pyrophosphatase (194 aa).

The Proton acceptor role is filled by Asp-77.

This sequence belongs to the Maf family. YhdE subfamily. The cofactor is a divalent metal cation.

It localises to the cytoplasm. The enzyme catalyses dTTP + H2O = dTMP + diphosphate + H(+). It catalyses the reaction UTP + H2O = UMP + diphosphate + H(+). In terms of biological role, nucleoside triphosphate pyrophosphatase that hydrolyzes dTTP and UTP. May have a dual role in cell division arrest and in preventing the incorporation of modified nucleotides into cellular nucleic acids. The chain is dTTP/UTP pyrophosphatase from Flavobacterium johnsoniae (strain ATCC 17061 / DSM 2064 / JCM 8514 / BCRC 14874 / CCUG 350202 / NBRC 14942 / NCIMB 11054 / UW101) (Cytophaga johnsonae).